Consider the following 212-residue polypeptide: Pyridoxine/pyridoxamine 5'-phosphate oxidase (212 aa).

Substrate contacts are provided by residues 8-11 and Lys66; that span reads RREY. FMN is bound by residues 61-66, 76-77, Arg82, Lys83, and Gln105; these read RIVLLK and FT. Substrate is bound by residues Tyr123, Arg127, and Ser131. Residues 140–141 and Trp185 contribute to the FMN site; that span reads QS. 191 to 193 is a substrate binding site; that stretch reads RLH. Arg195 is an FMN binding site.

This sequence belongs to the pyridoxamine 5'-phosphate oxidase family. Homodimer. Requires FMN as cofactor.

It carries out the reaction pyridoxamine 5'-phosphate + O2 + H2O = pyridoxal 5'-phosphate + H2O2 + NH4(+). The enzyme catalyses pyridoxine 5'-phosphate + O2 = pyridoxal 5'-phosphate + H2O2. It participates in cofactor metabolism; pyridoxal 5'-phosphate salvage; pyridoxal 5'-phosphate from pyridoxamine 5'-phosphate: step 1/1. It functions in the pathway cofactor metabolism; pyridoxal 5'-phosphate salvage; pyridoxal 5'-phosphate from pyridoxine 5'-phosphate: step 1/1. In terms of biological role, catalyzes the oxidation of either pyridoxine 5'-phosphate (PNP) or pyridoxamine 5'-phosphate (PMP) into pyridoxal 5'-phosphate (PLP). This is Pyridoxine/pyridoxamine 5'-phosphate oxidase from Shewanella halifaxensis (strain HAW-EB4).